The following is a 608-amino-acid chain: Tectonic-3 (608 aa).

The first 22 residues, 1-22 (MRTPQLALLQVFLLMFPDGVRP), serve as a signal peptide directing secretion. The disordered stretch occupies residues 23-58 (QPSSSPSGAVPTSLDLQPGTVGGTLQSSSEATATRP). Topologically, residues 23 to 586 (QPSSSPSGAV…AFSRGVSSQK (564 aa)) are extracellular. The segment covering 45–54 (GTLQSSSEAT) has biased composition (polar residues). Residues Asn-78, Asn-179, and Asn-347 are each glycosylated (N-linked (GlcNAc...) asparagine). A helical transmembrane segment spans residues 587 to 607 (CSVSPVLILCLLLLGVLNLET). Thr-608 is a topological domain (cytoplasmic).

This sequence belongs to the tectonic family. Part of the tectonic-like complex (also named B9 complex).

It localises to the membrane. Part of the tectonic-like complex which is required for tissue-specific ciliogenesis and may regulate ciliary membrane composition. May be involved in apoptosis regulation. Necessary for signal transduction through the sonic hedgehog (Shh) signaling pathway. This is Tectonic-3 (TCTN3) from Macaca fascicularis (Crab-eating macaque).